Here is a 313-residue protein sequence, read N- to C-terminus: Olfactory receptor 56A5 (313 aa).

The Extracellular segment spans residues 1 to 33 (MTLPSNNSTSPVFEFFLICFPSFQSWQHWLSLP). Asn6 and Asn7 each carry an N-linked (GlcNAc...) asparagine glycan. A helical transmembrane segment spans residues 34 to 54 (LSLLFLLAMGANATLLITIYL). Residues 55–67 (EASLHQPLYYLLS) are Cytoplasmic-facing. The chain crosses the membrane as a helical span at residues 68–88 (LLSLLDIVLCLTVIPKVLAIF). At 89-100 (WFDLRSISFPAC) the chain is on the extracellular side. An intrachain disulfide couples Cys100 to Cys182. The helical transmembrane segment at 101–121 (FLQVFIMNSFLTMESCTFMIM) threads the bilayer. The Cytoplasmic portion of the chain corresponds to 122 to 146 (AYDRYVAICKPLQYSSIITDQFVAR). A helical transmembrane segment spans residues 147–167 (AAIFVVARNGLLTMPIPILSS). Topologically, residues 168 to 203 (RLRYCAGHIIKNCICTNVSVSKLSCDDITLNQSYQF) are extracellular. 2 N-linked (GlcNAc...) asparagine glycosylation sites follow: Asn184 and Asn198. A helical transmembrane segment spans residues 204 to 224 (VIGWTLLGSDLILIVLSYFFI). At 225–246 (LKTVLRIKGEGDMAKALGTCGS) the chain is on the cytoplasmic side. A helical membrane pass occupies residues 247-267 (HFILILFFTTVLLVLVITNLA). Residues 268-276 (RKRIPPDVP) are Extracellular-facing. Residues 277–297 (ILLNILHHLIPPALNPIVYGV) traverse the membrane as a helical segment. Topologically, residues 298–313 (RTKEIKQGIQNLLRRL) are cytoplasmic.

The protein belongs to the G-protein coupled receptor 1 family.

The protein resides in the cell membrane. Its function is as follows. Odorant receptor. The chain is Olfactory receptor 56A5 (OR56A5) from Homo sapiens (Human).